The primary structure comprises 144 residues: Putative low molecular weight protein-tyrosine-phosphatase (144 aa).

C9 acts as the Nucleophile in catalysis. Residue R15 is part of the active site. D115 serves as the catalytic Proton donor.

It belongs to the low molecular weight phosphotyrosine protein phosphatase family.

It carries out the reaction O-phospho-L-tyrosyl-[protein] + H2O = L-tyrosyl-[protein] + phosphate. The polypeptide is Putative low molecular weight protein-tyrosine-phosphatase (Klebsiella pneumoniae).